We begin with the raw amino-acid sequence, 550 residues long: Methionine--tRNA ligase (550 aa).

A 'HIGH' region motif is present at residues 13-23 (PYANGPLHFGH). Residues Cys145, Cys148, Cys158, and Cys161 each coordinate Zn(2+). The 'KMSKS' region signature appears at 331–335 (QFSKS). An ATP-binding site is contributed by Lys334.

This sequence belongs to the class-I aminoacyl-tRNA synthetase family. MetG type 1 subfamily. As to quaternary structure, monomer. Zn(2+) serves as cofactor.

Its subcellular location is the cytoplasm. The enzyme catalyses tRNA(Met) + L-methionine + ATP = L-methionyl-tRNA(Met) + AMP + diphosphate. Is required not only for elongation of protein synthesis but also for the initiation of all mRNA translation through initiator tRNA(fMet) aminoacylation. In Chlamydia trachomatis serovar D (strain ATCC VR-885 / DSM 19411 / UW-3/Cx), this protein is Methionine--tRNA ligase (metG).